A 44-amino-acid polypeptide reads, in one-letter code: MSYKCSRCKRDVELDEYGGVRCPYCGHRVLLKERSRDVKEVSVQ.

The Zn(2+) site is built by Cys-8, Cys-22, and Cys-25.

Belongs to the archaeal Rpo12/eukaryotic RPC10 RNA polymerase subunit family. As to quaternary structure, part of the RNA polymerase complex. The cofactor is Zn(2+).

The protein resides in the cytoplasm. The enzyme catalyses RNA(n) + a ribonucleoside 5'-triphosphate = RNA(n+1) + diphosphate. Functionally, DNA-dependent RNA polymerase (RNAP) catalyzes the transcription of DNA into RNA using the four ribonucleoside triphosphates as substrates. The chain is DNA-directed RNA polymerase subunit Rpo12 from Halobacterium salinarum (strain ATCC 29341 / DSM 671 / R1).